Here is a 198-residue protein sequence, read N- to C-terminus: Bcl-2-like protein 11 (198 aa).

A disordered region spans residues 1 to 72 (MAKQPSDVSS…PLAPPASPGP (72 aa)). Ser-69 bears the Phosphoserine; by MAPK mark. Residues Ser-77, Ser-87, and Ser-94 each carry the phosphoserine modification. The short motif at 148 to 162 (IAQELRRIGDEFNAY) is the BH3 element.

It belongs to the Bcl-2 family. As to quaternary structure, forms heterodimers with a number of antiapoptotic Bcl-2 proteins, including MCL1, BCL2, BCL2L1 isoform Bcl-X(L), BCL2A1/BFL-1, BHRF1, and BCL2L2/BCLW. Does not heterodimerize with proapoptotic proteins such as BAD, BOK or BAK. Identified in a complex containing BCL2L11, DYNLL1 and BCL2L1 isoform Bcl-X(L); BH3 integrity is required for BCL2L1-binding. Interacts with YWHAZ. When phosphorylated, interacts with TRIM2; this interaction is associated with ubiquitination and degradation. Interacts with MCL1; may sequester BCL2L11 to prevent its pro-apoptotic activity. Interacts with GIMAP5. Interacts with BCL2L10/BCL-B. In terms of assembly, interacts (when phosphorylated) with USP27X; the interaction leads to BCL2L11 deubiquitination and stabilization. Interacts with humanin; the interaction prevents BIM-induced apoptosis. Does not interact with humanin. As to quaternary structure, interacts with BAX; the interaction may lead to BAX activation through conformational change. Does not interact with humanin. In terms of assembly, interacts with BAX; the interaction may lead to BAX activation through conformational change. Phosphorylation at Ser-69 by MAPK1/MAPK3 leads to interaction with TRIM2 and polyubiquitination, followed by proteasomal degradation. Deubiquitination catalyzed by USP27X stabilizes the protein. In terms of processing, ubiquitination by TRIM2 following phosphorylation by MAPK1/MAPK3 leads to proteasomal degradation. Conversely, deubiquitination catalyzed by USP27X stabilizes the protein. Isoform BimEL, isoform BimL and isoform BimS are the predominant isoforms and are widely expressed with tissue-specific variation. Isoform Bim-gamma is most abundantly expressed in small intestine and colon, and in lower levels in spleen, prostate, testis, heart, liver and kidney.

It localises to the endomembrane system. The protein localises to the mitochondrion. Functionally, induces apoptosis and anoikis. Isoform BimL is more potent than isoform BimEL. Isoform Bim-alpha1, isoform Bim-alpha2 and isoform Bim-alpha3 induce apoptosis, although less potent than isoform BimEL, isoform BimL and isoform BimS. Isoform Bim-gamma induces apoptosis. Isoform Bim-alpha3 induces apoptosis possibly through a caspase-mediated pathway. Isoform BimAC and isoform BimABC lack the ability to induce apoptosis. This chain is Bcl-2-like protein 11 (BCL2L11), found in Homo sapiens (Human).